Consider the following 541-residue polypeptide: Eukaryotic translation initiation factor 3 subunit E (541 aa).

The PCI domain occupies 252 to 443 (VEMFLSPVYL…GMVFMNPTHP (192 aa)). A disordered region spans residues 466–541 (AIDRKAHPPS…QQPAQAIAAN (76 aa)). Over residues 490-502 (NAGGRGGRGGQRN) the composition is skewed to gly residues. Residues 506 to 522 (QRDRSHAHNNEAKREGE) show a composition bias toward basic and acidic residues. Low complexity predominate over residues 523–541 (SASAEEAQQQQPAQAIAAN).

The protein belongs to the eIF-3 subunit E family. In terms of assembly, component of the eukaryotic translation initiation factor 3 (eIF-3) complex.

The protein localises to the cytoplasm. In terms of biological role, component of the eukaryotic translation initiation factor 3 (eIF-3) complex, which is involved in protein synthesis of a specialized repertoire of mRNAs and, together with other initiation factors, stimulates binding of mRNA and methionyl-tRNAi to the 40S ribosome. The eIF-3 complex specifically targets and initiates translation of a subset of mRNAs involved in cell proliferation. This chain is Eukaryotic translation initiation factor 3 subunit E, found in Mycosarcoma maydis (Corn smut fungus).